Reading from the N-terminus, the 145-residue chain is Aspartate 1-decarboxylase (145 aa).

Ser-25 serves as the catalytic Schiff-base intermediate with substrate; via pyruvic acid. Residue Ser-25 is modified to Pyruvic acid (Ser). Thr-57 serves as a coordination point for substrate. Tyr-58 acts as the Proton donor in catalysis. 73–75 (GAA) lines the substrate pocket.

Belongs to the PanD family. Heterooctamer of four alpha and four beta subunits. Pyruvate serves as cofactor. Post-translationally, is synthesized initially as an inactive proenzyme, which is activated by self-cleavage at a specific serine bond to produce a beta-subunit with a hydroxyl group at its C-terminus and an alpha-subunit with a pyruvoyl group at its N-terminus.

The protein localises to the cytoplasm. It catalyses the reaction L-aspartate + H(+) = beta-alanine + CO2. Its pathway is cofactor biosynthesis; (R)-pantothenate biosynthesis; beta-alanine from L-aspartate: step 1/1. Functionally, catalyzes the pyruvoyl-dependent decarboxylation of aspartate to produce beta-alanine. The polypeptide is Aspartate 1-decarboxylase (Micrococcus luteus (strain ATCC 4698 / DSM 20030 / JCM 1464 / CCM 169 / CCUG 5858 / IAM 1056 / NBRC 3333 / NCIMB 9278 / NCTC 2665 / VKM Ac-2230) (Micrococcus lysodeikticus)).